We begin with the raw amino-acid sequence, 368 residues long: Quinolinate synthase (368 aa).

The iminosuccinate site is built by His46 and Ser63. Residue Cys110 coordinates [4Fe-4S] cluster. Iminosuccinate-binding positions include 141-143 (YVN) and Ser162. Cys230 is a binding site for [4Fe-4S] cluster. Residues 256–258 (HPE) and Thr273 each bind iminosuccinate. Cys320 is a [4Fe-4S] cluster binding site.

The protein belongs to the quinolinate synthase family. Type 3 subfamily. Requires [4Fe-4S] cluster as cofactor.

Its subcellular location is the cytoplasm. It catalyses the reaction iminosuccinate + dihydroxyacetone phosphate = quinolinate + phosphate + 2 H2O + H(+). The protein operates within cofactor biosynthesis; NAD(+) biosynthesis; quinolinate from iminoaspartate: step 1/1. In terms of biological role, catalyzes the condensation of iminoaspartate with dihydroxyacetone phosphate to form quinolinate. This Bacillus mycoides (strain KBAB4) (Bacillus weihenstephanensis) protein is Quinolinate synthase.